We begin with the raw amino-acid sequence, 169 residues long: Lutropin/choriogonadotropin subunit beta (169 aa).

An N-terminal signal peptide occupies residues Met1–Ala20. Cystine bridges form between Cys29–Cys77, Cys43–Cys92, Cys46–Cys130, Cys54–Cys108, Cys58–Cys110, and Cys113–Cys120. Asn33 carries N-linked (GlcNAc...) asparagine glycosylation. The disordered stretch occupies residues Ala131–Ser169. A compositionally biased stretch (low complexity) spans Pro145 to Pro154. Positions Gly155–Ser169 are enriched in polar residues. A glycan (N-linked (GlcNAc...) asparagine) is linked at Asn158.

The protein belongs to the glycoprotein hormones subunit beta family. Heterodimer of a common alpha chain and a unique beta chain which confers biological specificity to thyrotropin, lutropin, follitropin and gonadotropin.

It is found in the secreted. Functionally, promotes spermatogenesis and ovulation by stimulating the testes and ovaries to synthesize steroids. This Equus quagga burchellii (Burchell's zebra) protein is Lutropin/choriogonadotropin subunit beta (LHB).